We begin with the raw amino-acid sequence, 141 residues long: Large ribosomal subunit protein uL16 (141 aa).

The protein belongs to the universal ribosomal protein uL16 family. In terms of assembly, part of the 50S ribosomal subunit.

Functionally, binds 23S rRNA and is also seen to make contacts with the A and possibly P site tRNAs. The sequence is that of Large ribosomal subunit protein uL16 from Nostoc punctiforme (strain ATCC 29133 / PCC 73102).